The chain runs to 259 residues: Ribosomal RNA small subunit methyltransferase A (259 aa).

N13, L15, G39, E60, D84, and N101 together coordinate S-adenosyl-L-methionine.

It belongs to the class I-like SAM-binding methyltransferase superfamily. rRNA adenine N(6)-methyltransferase family. RsmA subfamily.

The protein localises to the cytoplasm. It carries out the reaction adenosine(1518)/adenosine(1519) in 16S rRNA + 4 S-adenosyl-L-methionine = N(6)-dimethyladenosine(1518)/N(6)-dimethyladenosine(1519) in 16S rRNA + 4 S-adenosyl-L-homocysteine + 4 H(+). In terms of biological role, specifically dimethylates two adjacent adenosines (A1518 and A1519) in the loop of a conserved hairpin near the 3'-end of 16S rRNA in the 30S particle. May play a critical role in biogenesis of 30S subunits. The sequence is that of Ribosomal RNA small subunit methyltransferase A from Mesomycoplasma hyopneumoniae (strain J / ATCC 25934 / NCTC 10110) (Mycoplasma hyopneumoniae).